We begin with the raw amino-acid sequence, 351 residues long: Thiamine-phosphate synthase (351 aa).

Residues 1-129 (MVEPYSQKEQ…AKACKQMRYQ (129 aa)) are unknown. Positions 65–85 (LRAARDTPGDPGTELTHPQEE) are disordered. Residues 130-351 (VYTLESNLMG…SQLNRIKPEL (222 aa)) are thiamine-phosphate synthase. Residues 177 to 181 (QYRDK) and Asn-209 contribute to the 4-amino-2-methyl-5-(diphosphooxymethyl)pyrimidine site. Asp-210 and Asp-229 together coordinate Mg(2+). Ser-248 is a binding site for 4-amino-2-methyl-5-(diphosphooxymethyl)pyrimidine. A 2-[(2R,5Z)-2-carboxy-4-methylthiazol-5(2H)-ylidene]ethyl phosphate-binding site is contributed by 274 to 276 (TPT). Residue Lys-277 participates in 4-amino-2-methyl-5-(diphosphooxymethyl)pyrimidine binding. Gly-304 contributes to the 2-[(2R,5Z)-2-carboxy-4-methylthiazol-5(2H)-ylidene]ethyl phosphate binding site.

Belongs to the thiamine-phosphate synthase family. Requires Mg(2+) as cofactor.

It carries out the reaction 2-[(2R,5Z)-2-carboxy-4-methylthiazol-5(2H)-ylidene]ethyl phosphate + 4-amino-2-methyl-5-(diphosphooxymethyl)pyrimidine + 2 H(+) = thiamine phosphate + CO2 + diphosphate. It catalyses the reaction 2-(2-carboxy-4-methylthiazol-5-yl)ethyl phosphate + 4-amino-2-methyl-5-(diphosphooxymethyl)pyrimidine + 2 H(+) = thiamine phosphate + CO2 + diphosphate. The catalysed reaction is 4-methyl-5-(2-phosphooxyethyl)-thiazole + 4-amino-2-methyl-5-(diphosphooxymethyl)pyrimidine + H(+) = thiamine phosphate + diphosphate. It participates in cofactor biosynthesis; thiamine diphosphate biosynthesis; thiamine phosphate from 4-amino-2-methyl-5-diphosphomethylpyrimidine and 4-methyl-5-(2-phosphoethyl)-thiazole: step 1/1. Its function is as follows. Condenses 4-methyl-5-(beta-hydroxyethyl)thiazole monophosphate (THZ-P) and 2-methyl-4-amino-5-hydroxymethyl pyrimidine pyrophosphate (HMP-PP) to form thiamine monophosphate (TMP). The chain is Thiamine-phosphate synthase from Nostoc punctiforme (strain ATCC 29133 / PCC 73102).